We begin with the raw amino-acid sequence, 149 residues long: Nucleoside diphosphate kinase (149 aa).

Lys9, Phe57, Arg85, Thr91, Arg102, and Asn112 together coordinate ATP. The active-site Pros-phosphohistidine intermediate is His115.

Belongs to the NDK family. Homotetramer. Mg(2+) serves as cofactor.

The protein resides in the cytoplasm. The enzyme catalyses a 2'-deoxyribonucleoside 5'-diphosphate + ATP = a 2'-deoxyribonucleoside 5'-triphosphate + ADP. It carries out the reaction a ribonucleoside 5'-diphosphate + ATP = a ribonucleoside 5'-triphosphate + ADP. In terms of biological role, major role in the synthesis of nucleoside triphosphates other than ATP. The ATP gamma phosphate is transferred to the NDP beta phosphate via a ping-pong mechanism, using a phosphorylated active-site intermediate. The chain is Nucleoside diphosphate kinase from Synechocystis sp. (strain ATCC 27184 / PCC 6803 / Kazusa).